The chain runs to 430 residues: 5-methylthioadenosine/S-adenosylhomocysteine deaminase (430 aa).

Zn(2+) is bound by residues His-59 and His-61. The substrate site is built by Glu-88 and His-181. Residue His-208 coordinates Zn(2+). The substrate site is built by Glu-211 and Asp-296. Asp-296 is a binding site for Zn(2+).

This sequence belongs to the metallo-dependent hydrolases superfamily. MTA/SAH deaminase family. Zn(2+) is required as a cofactor.

The catalysed reaction is S-adenosyl-L-homocysteine + H2O + H(+) = S-inosyl-L-homocysteine + NH4(+). The enzyme catalyses S-methyl-5'-thioadenosine + H2O + H(+) = S-methyl-5'-thioinosine + NH4(+). In terms of biological role, catalyzes the deamination of 5-methylthioadenosine and S-adenosyl-L-homocysteine into 5-methylthioinosine and S-inosyl-L-homocysteine, respectively. Is also able to deaminate adenosine. The polypeptide is 5-methylthioadenosine/S-adenosylhomocysteine deaminase (Aquifex aeolicus (strain VF5)).